We begin with the raw amino-acid sequence, 350 residues long: Heat-inducible transcription repressor HrcA (350 aa).

The protein belongs to the HrcA family.

In terms of biological role, negative regulator of class I heat shock genes (grpE-dnaK-dnaJ and groELS operons). Prevents heat-shock induction of these operons. This is Heat-inducible transcription repressor HrcA from Xanthomonas axonopodis pv. citri (strain 306).